The chain runs to 183 residues: ATP synthase subunit delta (183 aa).

It belongs to the ATPase delta chain family. In terms of assembly, F-type ATPases have 2 components, F(1) - the catalytic core - and F(0) - the membrane proton channel. F(1) has five subunits: alpha(3), beta(3), gamma(1), delta(1), epsilon(1). F(0) has three main subunits: a(1), b(2) and c(10-14). The alpha and beta chains form an alternating ring which encloses part of the gamma chain. F(1) is attached to F(0) by a central stalk formed by the gamma and epsilon chains, while a peripheral stalk is formed by the delta and b chains.

Its subcellular location is the cell inner membrane. F(1)F(0) ATP synthase produces ATP from ADP in the presence of a proton or sodium gradient. F-type ATPases consist of two structural domains, F(1) containing the extramembraneous catalytic core and F(0) containing the membrane proton channel, linked together by a central stalk and a peripheral stalk. During catalysis, ATP synthesis in the catalytic domain of F(1) is coupled via a rotary mechanism of the central stalk subunits to proton translocation. Functionally, this protein is part of the stalk that links CF(0) to CF(1). It either transmits conformational changes from CF(0) to CF(1) or is implicated in proton conduction. The chain is ATP synthase subunit delta from Thermotoga neapolitana (strain ATCC 49049 / DSM 4359 / NBRC 107923 / NS-E).